The following is a 578-amino-acid chain: Proline--tRNA ligase (578 aa).

The protein belongs to the class-II aminoacyl-tRNA synthetase family. ProS type 1 subfamily. As to quaternary structure, homodimer.

Its subcellular location is the cytoplasm. The enzyme catalyses tRNA(Pro) + L-proline + ATP = L-prolyl-tRNA(Pro) + AMP + diphosphate. In terms of biological role, catalyzes the attachment of proline to tRNA(Pro) in a two-step reaction: proline is first activated by ATP to form Pro-AMP and then transferred to the acceptor end of tRNA(Pro). As ProRS can inadvertently accommodate and process non-cognate amino acids such as alanine and cysteine, to avoid such errors it has two additional distinct editing activities against alanine. One activity is designated as 'pretransfer' editing and involves the tRNA(Pro)-independent hydrolysis of activated Ala-AMP. The other activity is designated 'posttransfer' editing and involves deacylation of mischarged Ala-tRNA(Pro). The misacylated Cys-tRNA(Pro) is not edited by ProRS. The sequence is that of Proline--tRNA ligase from Burkholderia multivorans (strain ATCC 17616 / 249).